The sequence spans 382 residues: UDP-N-acetylglucosamine--N-acetylmuramyl-(pentapeptide) pyrophosphoryl-undecaprenol N-acetylglucosamine transferase (382 aa).

Residues 17–19, N137, R179, S213, and Q308 contribute to the UDP-N-acetyl-alpha-D-glucosamine site; that span reads TAG.

It belongs to the glycosyltransferase 28 family. MurG subfamily.

It is found in the cell membrane. It catalyses the reaction di-trans,octa-cis-undecaprenyl diphospho-N-acetyl-alpha-D-muramoyl-L-alanyl-D-glutamyl-meso-2,6-diaminopimeloyl-D-alanyl-D-alanine + UDP-N-acetyl-alpha-D-glucosamine = di-trans,octa-cis-undecaprenyl diphospho-[N-acetyl-alpha-D-glucosaminyl-(1-&gt;4)]-N-acetyl-alpha-D-muramoyl-L-alanyl-D-glutamyl-meso-2,6-diaminopimeloyl-D-alanyl-D-alanine + UDP + H(+). It participates in cell wall biogenesis; peptidoglycan biosynthesis. Cell wall formation. Catalyzes the transfer of a GlcNAc subunit on undecaprenyl-pyrophosphoryl-MurNAc-pentapeptide (lipid intermediate I) to form undecaprenyl-pyrophosphoryl-MurNAc-(pentapeptide)GlcNAc (lipid intermediate II). In Rhodococcus opacus (strain B4), this protein is UDP-N-acetylglucosamine--N-acetylmuramyl-(pentapeptide) pyrophosphoryl-undecaprenol N-acetylglucosamine transferase.